Consider the following 219-residue polypeptide: Ribonuclease HII (219 aa).

One can recognise an RNase H type-2 domain in the interval 10–219; that stretch reads HLEAGTDEAG…LLPEQTVLDL (210 aa). Positions 16, 17, and 108 each coordinate a divalent metal cation.

It belongs to the RNase HII family. Mn(2+) is required as a cofactor. It depends on Mg(2+) as a cofactor.

Its subcellular location is the cytoplasm. It carries out the reaction Endonucleolytic cleavage to 5'-phosphomonoester.. Functionally, endonuclease that specifically degrades the RNA of RNA-DNA hybrids. This chain is Ribonuclease HII, found in Flavobacterium psychrophilum (strain ATCC 49511 / DSM 21280 / CIP 103535 / JIP02/86).